We begin with the raw amino-acid sequence, 411 residues long: SKA complex subunit 3 (411 aa).

Residues Ser-34, Ser-119, Ser-138, Ser-154, and Ser-158 each carry the phosphoserine modification. The interval 102 to 410 (YQARDKEDSG…GTRGAANKEN (309 aa)) is binds the NDC80 complex. Residues Thr-189 and Thr-216 each carry the phosphothreonine modification. A binds microtubules and contacts the microtubule-binding domain of SKA1 region spans residues 195–410 (PSVQVLKTPR…GTRGAANKEN (216 aa)). Ser-289 carries the post-translational modification Phosphoserine. Thr-297 is subject to Phosphothreonine. Phosphoserine occurs at positions 324 and 352. The tract at residues 349–410 (EPPSSAITSC…GTRGAANKEN (62 aa)) is required for localization to kinetochores. Position 363 is a phosphothreonine (Thr-363).

This sequence belongs to the SKA3 family. As to quaternary structure, component of the SKA complex, composed of SKA1, SKA2 and SKA3. The SKA complex is a homodimer organized around a central W-shaped coiled-coil structure, formed by the interacting domains of SKA1, SKA2, and SKA3, each end of the 'W' is extended further by the C-terminal microtubule-binding domains of SKA1 and SKA3; the complex forms extended structures on microtubules. Interacts with the NDC80-NUF2 heterodimer of the NDC80 complex (via coiled coils); the interaction localizes the SKA complex to the kinetochore and is required to establish kinetochore-microtubule end-on attachments. Interacts with polo-like kinase PLK1.

Its subcellular location is the cytoplasm. The protein resides in the cytoskeleton. It is found in the spindle. The protein localises to the chromosome. It localises to the centromere. Its subcellular location is the kinetochore. The protein resides in the microtubule organizing center. It is found in the centrosome. Its function is as follows. Component of the SKA complex, a microtubule plus end-binding complex of the outer kinetochore that stabilizes spindle microtubule-kinetochore attachments, promotes alignment of chromosomes at the mitotic spindle equator (chromosome congression) and assists suppression of the spindle assembly checkpoint. Kinetochores, consisting of a centromere-associated inner segment and a microtubule-contacting outer segment, play a crucial role in chromosome segregation by mediating the physical connection between centromeric DNA and spindle microtubules. The outer kinetochore is made up of the ten-subunit KMN network complex, comprising the MIS12, NDC80 and KNL1 complexes, and auxiliary microtubule-associated components such as the SKA complex; together they connect the outer kinetochore with the inner kinetochore, bind microtubules, and mediate interactions with mitotic checkpoint proteins that delay anaphase until chromosomes are bioriented on the spindle. The SKA complex is loaded onto bioriented kinetochores and it facilitates chromosome congression by stabilizing microtubules together with MAPRE1, and end-on attachment of the NDC80 complex to depolymerizing spindle microtubules, thereby assisting the poleward-moving kinetochore in withstanding microtubule pulling forces. The complex associates with dynamic microtubule plus-ends and can track both depolymerizing and elongating microtubules. The complex recruits protein phosphatase 1 (PP1) to the kinetochore in prometaphase and metaphase, to oppose spindle assembly checkpoint signaling and promote the onset of anaphase. Within the complex, binds microtubules but with a much lower affinity than SKA1. Promotes stability of the polo-like kinase PLK1 protein. During meiosis the SKA complex stabilizes the meiotic spindle and is required for its migration to the cortex. This is SKA complex subunit 3 (Ska3) from Mus musculus (Mouse).